The primary structure comprises 144 residues: Large ribosomal subunit protein uL16 (144 aa).

Residues 1–14 are compositionally biased toward basic residues; sequence MLMPKRVKYRKPHR. Positions 1-25 are disordered; sequence MLMPKRVKYRKPHRPGTQGKATRGN.

Belongs to the universal ribosomal protein uL16 family. In terms of assembly, part of the 50S ribosomal subunit.

Functionally, binds 23S rRNA and is also seen to make contacts with the A and possibly P site tRNAs. This Moorella thermoacetica (strain ATCC 39073 / JCM 9320) protein is Large ribosomal subunit protein uL16.